The sequence spans 356 residues: Glutamine synthetase cytosolic isozyme 1-4 (356 aa).

Ser-2 carries the post-translational modification N-acetylserine. A phosphoserine mark is found at Ser-2 and Ser-48. The GS beta-grasp domain occupies 19–99 (IIAEYIWIGG…VMCDAYTPAG (81 aa)). The segment at 37–66 (ARTLPGPVTDPSQLPKWNYDGSSTGQAPGD) is disordered. The GS catalytic domain maps to 106 to 356 (KRHAAAKIFE…IAESTILWKP (251 aa)).

The protein belongs to the glutamine synthetase family. As to quaternary structure, homooctamer. Interacts with GRF3. Expressed in the pericycle in the region of lateral root emergence.

It localises to the cytoplasm. It carries out the reaction L-glutamate + NH4(+) + ATP = L-glutamine + ADP + phosphate + H(+). Its function is as follows. High-affinity glutamine synthetase. May contribute to the homeostatic control of glutamine synthesis in roots. The sequence is that of Glutamine synthetase cytosolic isozyme 1-4 from Arabidopsis thaliana (Mouse-ear cress).